We begin with the raw amino-acid sequence, 593 residues long: Probable translation initiation factor IF-2 (593 aa).

The tr-type G domain occupies 7 to 221 (IRTPIVCVMG…VLIGLAQRYM (215 aa)). Residues 16-23 (GHVDHGKT) form a G1 region. 16-23 (GHVDHGKT) contacts GTP. Residues 41–45 (EITQH) form a G2 region. Residues 77-80 (DTPG) form a G3 region. GTP-binding positions include 77 to 81 (DTPGH) and 131 to 134 (NKVD). The interval 131–134 (NKVD) is G4. The tract at residues 199–201 (SAL) is G5.

It belongs to the TRAFAC class translation factor GTPase superfamily. Classic translation factor GTPase family. IF-2 subfamily.

Functionally, function in general translation initiation by promoting the binding of the formylmethionine-tRNA to ribosomes. Seems to function along with eIF-2. The protein is Probable translation initiation factor IF-2 of Methanoculleus marisnigri (strain ATCC 35101 / DSM 1498 / JR1).